A 627-amino-acid chain; its full sequence is Chaperone protein DnaK (627 aa).

A Phosphothreonine; by autocatalysis modification is found at Thr197. The segment covering Met596–Gly615 has biased composition (low complexity). The disordered stretch occupies residues Met596–Lys627. Acidic residues predominate over residues Asn617–Lys627.

This sequence belongs to the heat shock protein 70 family.

Its function is as follows. Acts as a chaperone. The polypeptide is Chaperone protein DnaK (Flavobacterium johnsoniae (strain ATCC 17061 / DSM 2064 / JCM 8514 / BCRC 14874 / CCUG 350202 / NBRC 14942 / NCIMB 11054 / UW101) (Cytophaga johnsonae)).